The primary structure comprises 147 residues: UPF0208 membrane protein CGSHiEE_06015 (147 aa).

Helical transmembrane passes span 38-58 and 67-87; these read FAQKFMPFVAVFAILWQQIYA and IAILTALFALLIPFQGLYWLG.

It belongs to the UPF0208 family.

The protein localises to the cell inner membrane. This chain is UPF0208 membrane protein CGSHiEE_06015, found in Haemophilus influenzae (strain PittEE).